The primary structure comprises 291 residues: MAENQEALAEFYDKGVGVWDNLSREHMHFGYYAPGATATIGGHRASLVRLIDEALCFAEFPDDPEKKPRNMLDVGCGIGGTCLHVAKKYDIQCKGINISPEQVKIAQGLAAAQGLESKVSFDVGDALDMPYPDGAFDLVLSIHCIEHLQDKEKFIREMVRVAASGATIIILSHVHRDLSPSEQSLKPQEERVLRKIGSSVQAWFCPLSNYVSLLAPLPVEVIKIADWSRNIDPSSRLMLKVAFSVKGIVSNLMKGVQGWTAIKNVLPMKLLHKALHDGLVKFVVLTCRKSN.

Residues M71–G80 form an SAM motif I region. Residues D133–V139 carry the Vacuolar targeting signal motif. The segment at G134–I142 is SAM motif II. Residues V161 to I170 are SAM motif III.

It belongs to the class I-like SAM-binding methyltransferase superfamily. gTMT family. In terms of assembly, homodimer. As to expression, mainly expressed in roots, but barely detectable in stems and flowers.

The protein localises to the vacuole membrane. It catalyses the reaction ajmaline + S-adenosyl-L-methionine = 4-methylajmaline + S-adenosyl-L-homocysteine + H(+). The enzyme catalyses norajmaline + S-adenosyl-L-methionine = 4-methylnorajmaline + S-adenosyl-L-homocysteine + H(+). Its pathway is alkaloid biosynthesis; ajmaline biosynthesis. In terms of biological role, N-methyltransferase involved in the biosynthesis of ajmaline-type monoterpenoid indole alkaloids (MIAs) natural products, important plant-derived pharmaceuticals used in the therapy of heart disorders. Catalyzes the indole N-methylation of ajmaline to produce 4-methylajmaline. Also able, with a lower efficiency, to mediates the conversion of norajmaline to 4-methylnorajmaline. The polypeptide is Ajmaline N-methyltransferase (Rauvolfia serpentina (Serpentine wood)).